We begin with the raw amino-acid sequence, 109 residues long: Cell division suppressor protein YneA (109 aa).

In terms of domain architecture, LysM spans 39–90 (SEVDVNEGDSIWALADQYAAKSDMAKADFVSWVEKENNLTDGHVKAGDYVVI).

It belongs to the YneA family.

The protein localises to the cytoplasm. Its function is as follows. Inhibits cell division during the SOS response. Affects a later stage of the cell division protein assembly, after the assembly of the Z ring, by probably suppressing recruitment of FtsL and/or DivIC to the division machinery. In Listeria innocua serovar 6a (strain ATCC BAA-680 / CLIP 11262), this protein is Cell division suppressor protein YneA.